The primary structure comprises 337 residues: Putative 2-aminoethylphosphonate-binding periplasmic protein (337 aa).

The signal sequence occupies residues 1 to 21 (MKLSRLALLSVFALASAPSWA).

Belongs to the bacterial solute-binding protein 1 family.

It is found in the periplasm. Functionally, probably part of the PhnSTUV complex (TC 3.A.1.11.5) involved in 2-aminoethylphosphonate import. The sequence is that of Putative 2-aminoethylphosphonate-binding periplasmic protein (phnS) from Salmonella typhimurium (strain LT2 / SGSC1412 / ATCC 700720).